The sequence spans 175 residues: MMYIVFIMSVLYVVGFIGFSSKPSPVYGGMSLVVSGGLGCGIIMGSGGSFLGLVVFLVYLGGMMVVFGYTIAMATEEYPETWGSNVVVLGAFLVGLLMEVFMIMWLFSGEHELVGFYFGGLEDLMVLGEGGFEYVREDYSGGASLYSYGFWFLAMAGWMLFVSIFIAIEVTRKRY.

6 helical membrane passes run 1 to 21 (MMYI…GFSS), 25 to 45 (PVYG…IIMG), 51 to 71 (LGLV…GYTI), 87 to 107 (VVLG…MWLF), 112 to 132 (ELVG…EGGF), and 148 to 168 (YGFW…FIAI).

This sequence belongs to the complex I subunit 6 family. As to quaternary structure, core subunit of respiratory chain NADH dehydrogenase (Complex I) which is composed of 45 different subunits.

Its subcellular location is the mitochondrion inner membrane. It carries out the reaction a ubiquinone + NADH + 5 H(+)(in) = a ubiquinol + NAD(+) + 4 H(+)(out). In terms of biological role, core subunit of the mitochondrial membrane respiratory chain NADH dehydrogenase (Complex I) which catalyzes electron transfer from NADH through the respiratory chain, using ubiquinone as an electron acceptor. Essential for the catalytic activity and assembly of complex I. This chain is NADH-ubiquinone oxidoreductase chain 6 (MT-ND6), found in Loxodonta africana (African elephant).